The following is a 105-amino-acid chain: uncharacterized protein (105 aa).

The helical transmembrane segment at F8–S28 threads the bilayer. Residues D32–S53 form a disordered region. Residues V72–F92 form a helical membrane-spanning segment.

This sequence to M.jannaschii MJ1570.

Its subcellular location is the cell membrane. This is an uncharacterized protein from Methanothermobacter thermautotrophicus (strain ATCC 29096 / DSM 1053 / JCM 10044 / NBRC 100330 / Delta H) (Methanobacterium thermoautotrophicum).